Here is a 431-residue protein sequence, read N- to C-terminus: Glutamate-1-semialdehyde 2,1-aminomutase (431 aa).

The residue at position 269 (K269) is an N6-(pyridoxal phosphate)lysine.

It belongs to the class-III pyridoxal-phosphate-dependent aminotransferase family. HemL subfamily. In terms of assembly, homodimer. Pyridoxal 5'-phosphate serves as cofactor.

Its subcellular location is the cytoplasm. It carries out the reaction (S)-4-amino-5-oxopentanoate = 5-aminolevulinate. The protein operates within porphyrin-containing compound metabolism; protoporphyrin-IX biosynthesis; 5-aminolevulinate from L-glutamyl-tRNA(Glu): step 2/2. Its pathway is porphyrin-containing compound metabolism; chlorophyll biosynthesis. This chain is Glutamate-1-semialdehyde 2,1-aminomutase, found in Chlorobium luteolum (strain DSM 273 / BCRC 81028 / 2530) (Pelodictyon luteolum).